Consider the following 294-residue polypeptide: ATP phosphoribosyltransferase (294 aa).

It belongs to the ATP phosphoribosyltransferase family. Long subfamily. It depends on Mg(2+) as a cofactor.

It is found in the cytoplasm. The catalysed reaction is 1-(5-phospho-beta-D-ribosyl)-ATP + diphosphate = 5-phospho-alpha-D-ribose 1-diphosphate + ATP. The protein operates within amino-acid biosynthesis; L-histidine biosynthesis; L-histidine from 5-phospho-alpha-D-ribose 1-diphosphate: step 1/9. Its activity is regulated as follows. Feedback inhibited by histidine. In terms of biological role, catalyzes the condensation of ATP and 5-phosphoribose 1-diphosphate to form N'-(5'-phosphoribosyl)-ATP (PR-ATP). Has a crucial role in the pathway because the rate of histidine biosynthesis seems to be controlled primarily by regulation of HisG enzymatic activity. This Maricaulis maris (strain MCS10) (Caulobacter maris) protein is ATP phosphoribosyltransferase.